We begin with the raw amino-acid sequence, 345 residues long: MSTPTPLSYKDAGVDIDAGNALVSNIKAAVKRTRRPEVMGNLGGFGALCEIPTKYKQPVLVSGTDGVGTKLRLAIDYKKHDTVGIDLVAMCVNDLIVQGAEPLFFLDYYATGKLDVETATSVVNGIGEGCFQSGCALIGGETAEMPGMYEGEDYDLAGFCVGVVEKADIIDGSKVAAGDALIALASSGPHSNGYSLVRKVLEVSQADPQQDLNGKPLIEHLLEPTKIYVKSLLKLIAASDVHAMAHITGGGFWENIPRVLPDNLKAVIQGDSWQWPAVFSWLMENGNIAEYEMYRTFNCGVGMLVALPADKVDAALALLAAEGEQAWLIGAIADREGNEEQVEIL.

Belongs to the AIR synthase family.

It localises to the cytoplasm. It carries out the reaction 2-formamido-N(1)-(5-O-phospho-beta-D-ribosyl)acetamidine + ATP = 5-amino-1-(5-phospho-beta-D-ribosyl)imidazole + ADP + phosphate + H(+). The protein operates within purine metabolism; IMP biosynthesis via de novo pathway; 5-amino-1-(5-phospho-D-ribosyl)imidazole from N(2)-formyl-N(1)-(5-phospho-D-ribosyl)glycinamide: step 2/2. The protein is Phosphoribosylformylglycinamidine cyclo-ligase of Shewanella baltica (strain OS223).